The following is a 453-amino-acid chain: CBL-interacting protein kinase 24 (453 aa).

Residues 18–271 (YEVGRTIGQG…IEQIREDTWF (254 aa)) form the Protein kinase domain. Residues 24–32 (IGQGTFAKV) and lysine 47 contribute to the ATP site. Catalysis depends on aspartate 141, which acts as the Proton acceptor. Residues 159 to 186 (DFGLSTLAQKGVGLLHTTCGTPNYVAPE) are activation loop. The 27-residue stretch at 310 to 336 (NDGGPLVMNAFEMITLSQGLDLSALFD) folds into the NAF domain. Positions 343–372 (KRQTRFVSRKPAKTIVATIEVVAETMGLKV) are PPI.

Belongs to the protein kinase superfamily. CAMK Ser/Thr protein kinase family. SNF1 subfamily. Interacts with CBL4. Mn(2+) is required as a cofactor.

It catalyses the reaction L-seryl-[protein] + ATP = O-phospho-L-seryl-[protein] + ADP + H(+). It carries out the reaction L-threonyl-[protein] + ATP = O-phospho-L-threonyl-[protein] + ADP + H(+). Involved in the regulatory pathway for the control of intracellular Na(+) and K(+) homeostasis and salt tolerance. Operates in synergy with CBL4 to activate the plasma membrane Na(+)/H(+) antiporter SOS1. CIPK serine-threonine protein kinases interact with CBL proteins. Binding of a CBL protein to the regulatory NAF domain of CIPK protein lead to the activation of the kinase in a calcium-dependent manner. This is CBL-interacting protein kinase 24 (CIPK24) from Oryza sativa subsp. japonica (Rice).